The primary structure comprises 207 residues: Ribosomal RNA small subunit methyltransferase G (207 aa).

S-adenosyl-L-methionine-binding positions include Gly73, Leu78, 124-125 (VE), and Arg139.

The protein belongs to the methyltransferase superfamily. RNA methyltransferase RsmG family.

It localises to the cytoplasm. It carries out the reaction guanosine(527) in 16S rRNA + S-adenosyl-L-methionine = N(7)-methylguanosine(527) in 16S rRNA + S-adenosyl-L-homocysteine. Specifically methylates the N7 position of guanine in position 527 of 16S rRNA. In Shigella flexneri, this protein is Ribosomal RNA small subunit methyltransferase G.